A 447-amino-acid chain; its full sequence is UDP-N-acetylglucosamine 1-carboxyvinyltransferase (447 aa).

27–28 (KN) contributes to the phosphoenolpyruvate binding site. Arg97 serves as a coordination point for UDP-N-acetyl-alpha-D-glucosamine. Cys121 functions as the Proton donor in the catalytic mechanism. The residue at position 121 (Cys121) is a 2-(S-cysteinyl)pyruvic acid O-phosphothioketal. UDP-N-acetyl-alpha-D-glucosamine contacts are provided by residues 126 to 130 (RPVDL), Asp314, and Val336.

The protein belongs to the EPSP synthase family. MurA subfamily.

It localises to the cytoplasm. The enzyme catalyses phosphoenolpyruvate + UDP-N-acetyl-alpha-D-glucosamine = UDP-N-acetyl-3-O-(1-carboxyvinyl)-alpha-D-glucosamine + phosphate. The protein operates within cell wall biogenesis; peptidoglycan biosynthesis. Cell wall formation. Adds enolpyruvyl to UDP-N-acetylglucosamine. The chain is UDP-N-acetylglucosamine 1-carboxyvinyltransferase from Trichormus variabilis (strain ATCC 29413 / PCC 7937) (Anabaena variabilis).